The primary structure comprises 261 residues: DNA-directed RNA polymerase subunit Rpo3 (261 aa).

Belongs to the archaeal Rpo3/eukaryotic RPB3 RNA polymerase subunit family. As to quaternary structure, part of the RNA polymerase complex.

It is found in the cytoplasm. It catalyses the reaction RNA(n) + a ribonucleoside 5'-triphosphate = RNA(n+1) + diphosphate. Functionally, DNA-dependent RNA polymerase (RNAP) catalyzes the transcription of DNA into RNA using the four ribonucleoside triphosphates as substrates. This chain is DNA-directed RNA polymerase subunit Rpo3, found in Pyrococcus furiosus (strain ATCC 43587 / DSM 3638 / JCM 8422 / Vc1).